A 969-amino-acid chain; its full sequence is Protein translocase subunit SecA (969 aa).

Residues Gln99, 117–121, and Asp631 each bind ATP; that span reads GEGKT.

This sequence belongs to the SecA family. As to quaternary structure, monomer and homodimer. Part of the essential Sec protein translocation apparatus which comprises SecA, SecYEG and auxiliary proteins SecDF. Other proteins may also be involved.

Its subcellular location is the cell inner membrane. The protein localises to the cytoplasm. The catalysed reaction is ATP + H2O + cellular proteinSide 1 = ADP + phosphate + cellular proteinSide 2.. Part of the Sec protein translocase complex. Interacts with the SecYEG preprotein conducting channel. Has a central role in coupling the hydrolysis of ATP to the transfer of proteins into and across the cell membrane, serving as an ATP-driven molecular motor driving the stepwise translocation of polypeptide chains across the membrane. In Chlamydia abortus (strain DSM 27085 / S26/3) (Chlamydophila abortus), this protein is Protein translocase subunit SecA.